Reading from the N-terminus, the 393-residue chain is FAD-dependent monooxygenase dbaB (393 aa).

The N-terminal stretch at 1 to 23 is a signal peptide; sequence MTRTSPTLPVIILGAGMVGLTLA. 2 residues coordinate FAD: Glu37 and Arg107. A glycan (N-linked (GlcNAc...) asparagine) is linked at Asn128. Tyr221 is a catalytic residue. A glycan (N-linked (GlcNAc...) asparagine) is linked at Asn233. Asp320 serves as a coordination point for FAD.

Belongs to the paxM FAD-dependent monooxygenase family. Requires FAD as cofactor.

It participates in secondary metabolite biosynthesis. Functionally, FAD-dependent monooxygenase; part of the gene cluster that mediates the biosynthesis of the antibiotic 2,4-dihydroxy-3-methyl-6-(2-oxopropyl)benzaldehyde (DHMBA) and its derivatives. The direct non-reducing polyketide synthase dbaI product is 2,4-dihydroxy-3-methyl-6-(2-oxopropyl)benzaldehyde (DHMBA), produced by condensation of one acetyl-CoA starter unit with 4 malonyl-CoA units and one methylation step. The FAD-dependent monooxygenase dbaH is responsible for the synthesis of yellow pigments derived from the oxidation of DHMBA. The roles of dbaB, C, E and F have still to be determined. This Emericella nidulans (strain FGSC A4 / ATCC 38163 / CBS 112.46 / NRRL 194 / M139) (Aspergillus nidulans) protein is FAD-dependent monooxygenase dbaB.